A 417-amino-acid chain; its full sequence is Phosphoglycerate kinase 2 (417 aa).

N-acetylserine is present on Ser-2. 2 positions are modified to phosphoserine: Ser-2 and Ser-4. N6-acetyllysine is present on Lys-11. 10 residues coordinate (2R)-3-phosphoglycerate: Val-23, Asp-24, Phe-25, Asn-26, Gln-38, Arg-39, Ser-62, His-63, Gly-65, and Arg-66. N6-acetyllysine occurs at positions 75, 86, and 97. (2R)-3-phosphoglycerate contacts are provided by Leu-122 and Arg-123. N6-acetyllysine is present on residues Lys-131 and Lys-146. Residues His-170 and Arg-171 each coordinate (2R)-3-phosphoglycerate. Phosphotyrosine is present on Tyr-196. Lys-199 carries the post-translational modification N6-acetyllysine. An ADP-binding site is contributed by Gly-214. Gly-214 contacts CDP. Residues Ala-215 and Lys-216 each coordinate AMP. Residue Ala-215 coordinates ATP. A Mg(2+)-binding site is contributed by Ala-215. Mg(2+) contacts are provided by Ala-218 and Asp-219. Asp-219 is a CDP binding site. Lys-220 lines the AMP pocket. Lys-220 serves as a coordination point for ATP. An ADP-binding site is contributed by Gly-238. Gly-238 lines the CDP pocket. Position 239 (Gly-239) interacts with AMP. Gly-239 is a binding site for ATP. Residues Lys-267 and Lys-291 each carry the N6-acetyllysine modification. Residue Ala-313 coordinates AMP. Residue Ala-313 coordinates ATP. Residues Gly-338 and Phe-343 each coordinate CDP. Phe-343 lines the ADP pocket. Glu-344 provides a ligand contact to AMP. ATP-binding residues include Glu-344, Asp-375, and Thr-376. A Mg(2+)-binding site is contributed by Asp-375.

It belongs to the phosphoglycerate kinase family. Monomer. Mg(2+) is required as a cofactor. As to expression, testis specific.

The protein resides in the cytoplasm. It catalyses the reaction (2R)-3-phosphoglycerate + ATP = (2R)-3-phospho-glyceroyl phosphate + ADP. It participates in carbohydrate degradation; glycolysis; pyruvate from D-glyceraldehyde 3-phosphate: step 2/5. Essential for sperm motility and male fertility but is not required for the completion of spermatogenesis. This is Phosphoglycerate kinase 2 from Sus scrofa (Pig).